Reading from the N-terminus, the 132-residue chain is Ubiquinol-cytochrome c reductase complex assembly factor 4 (132 aa).

Positions 1–15 (MNRVLCAPAAGAVRA) are cleaved as a signal peptide. The Mitochondrial matrix segment spans residues 16 to 78 (LRLIGWASRS…GKGHQRPWWK (63 aa)). The tract at residues 29-72 (LPGSRDRAHPAAEEEDDPDRPIEFSSSKANPHRWSVGHTMGKGH) is disordered. A helical transmembrane segment spans residues 79–95 (VLPLSCFLVALIIWCYL). At 96–132 (REESEADQWLRQVWGEVPEPSDRSEEPETPAAYRART) the chain is on the mitochondrial intermembrane side. A disordered region spans residues 110–132 (GEVPEPSDRSEEPETPAAYRART).

The protein belongs to the UQCC4 family. In terms of assembly, forms a complex, named COMB/coordinator of mitochondrial CYTB biogenesis, composed of UQCC1, UQCC2, UQCC4, UQCC5 and UQCC6; stabilizes nascent cytochrome b/MT-CYB and promotes its membrane insertion. Forms a complex, named COMA, composed of UQCC1, UQCC2 and UQCC4; activates MT-CYB translation. Forms a complex, named COMC, composed of UQCC1, UQCC2; UQCC3 and UQCC4; mediates MT-CYB hemylation and association with the first nuclear-encoded complex III subunit UQCRQ. Complexes COMA and COMB are bound to the mitochondrion inner membrane by UQCC4.

The protein localises to the mitochondrion inner membrane. Functionally, required for the assembly and stability of the mitochondrial ubiquinol-cytochrome c reductase complex (complex III (CIII) or cytochrome b-c1 complex), a multisubunit transmembrane complex that is part of the mitochondrial electron transport chain (ETC) which drives oxidative phosphorylation. This is Ubiquinol-cytochrome c reductase complex assembly factor 4 from Homo sapiens (Human).